A 156-amino-acid polypeptide reads, in one-letter code: ATP synthase subunit b (156 aa).

The helical transmembrane segment at L7–I29 threads the bilayer.

This sequence belongs to the ATPase B chain family. In terms of assembly, F-type ATPases have 2 components, F(1) - the catalytic core - and F(0) - the membrane proton channel. F(1) has five subunits: alpha(3), beta(3), gamma(1), delta(1), epsilon(1). F(0) has three main subunits: a(1), b(2) and c(10-14). The alpha and beta chains form an alternating ring which encloses part of the gamma chain. F(1) is attached to F(0) by a central stalk formed by the gamma and epsilon chains, while a peripheral stalk is formed by the delta and b chains.

The protein resides in the cell inner membrane. In terms of biological role, f(1)F(0) ATP synthase produces ATP from ADP in the presence of a proton or sodium gradient. F-type ATPases consist of two structural domains, F(1) containing the extramembraneous catalytic core and F(0) containing the membrane proton channel, linked together by a central stalk and a peripheral stalk. During catalysis, ATP synthesis in the catalytic domain of F(1) is coupled via a rotary mechanism of the central stalk subunits to proton translocation. Functionally, component of the F(0) channel, it forms part of the peripheral stalk, linking F(1) to F(0). The polypeptide is ATP synthase subunit b (Vibrio vulnificus (strain CMCP6)).